We begin with the raw amino-acid sequence, 473 residues long: Photosystem II CP43 reaction center protein (473 aa).

Positions 1-14 (MKTLYSLRRFYPVE) are excised as a propeptide. T15 is modified (N-acetylthreonine). T15 bears the Phosphothreonine mark. Transmembrane regions (helical) follow at residues 69–93 (LFEV…PHLA), 134–155 (LLGP…KDRN), 178–200 (KALY…RKIT), 255–275 (KPFA…LSYS), and 291–312 (WFNN…ASQA). E367 lines the [CaMn4O5] cluster pocket. Residues 447-471 (RARAAAAGFEKGIDRDFEPVLSMTP) form a helical membrane-spanning segment.

The protein belongs to the PsbB/PsbC family. PsbC subfamily. PSII is composed of 1 copy each of membrane proteins PsbA, PsbB, PsbC, PsbD, PsbE, PsbF, PsbH, PsbI, PsbJ, PsbK, PsbL, PsbM, PsbT, PsbX, PsbY, PsbZ, Psb30/Ycf12, at least 3 peripheral proteins of the oxygen-evolving complex and a large number of cofactors. It forms dimeric complexes. Binds multiple chlorophylls and provides some of the ligands for the Ca-4Mn-5O cluster of the oxygen-evolving complex. It may also provide a ligand for a Cl- that is required for oxygen evolution. PSII binds additional chlorophylls, carotenoids and specific lipids. is required as a cofactor.

The protein resides in the plastid. It is found in the chloroplast thylakoid membrane. Its function is as follows. One of the components of the core complex of photosystem II (PSII). It binds chlorophyll and helps catalyze the primary light-induced photochemical processes of PSII. PSII is a light-driven water:plastoquinone oxidoreductase, using light energy to abstract electrons from H(2)O, generating O(2) and a proton gradient subsequently used for ATP formation. This Amborella trichopoda protein is Photosystem II CP43 reaction center protein.